We begin with the raw amino-acid sequence, 291 residues long: Pentonolactonase XacC (291 aa).

A divalent metal cation-binding residues include Glu15, Asn141, and Asp191. The Proton donor/acceptor role is filled by Asp191.

Belongs to the SMP-30/CGR1 family. In terms of assembly, monomer. Requires a divalent metal cation as cofactor.

It catalyses the reaction L-arabinono-1,4-lactone + H2O = L-arabinonate + H(+). It carries out the reaction D-xylono-1,4-lactone + H2O = D-xylonate + H(+). It participates in carbohydrate degradation. Pentonolactonase involved in D-arabinose and D-xylose catabolism. Catalyzes the hydrolysis of both L-arabino-gamma-lactone and D-xylono-gamma-lactone to the corresponding acids. Can also hydrolyze D-galactono-gamma-lactone and D-glucono-delta-lactone. The chain is Pentonolactonase XacC from Haloferax volcanii (strain ATCC 29605 / DSM 3757 / JCM 8879 / NBRC 14742 / NCIMB 2012 / VKM B-1768 / DS2) (Halobacterium volcanii).